The following is a 299-amino-acid chain: Acetylglutamate kinase (299 aa).

Residues Gly68–Gly69, Arg90, and Asn195 each bind substrate.

It belongs to the acetylglutamate kinase family. ArgB subfamily.

The protein resides in the cytoplasm. It carries out the reaction N-acetyl-L-glutamate + ATP = N-acetyl-L-glutamyl 5-phosphate + ADP. Its pathway is amino-acid biosynthesis; L-arginine biosynthesis; N(2)-acetyl-L-ornithine from L-glutamate: step 2/4. Functionally, catalyzes the ATP-dependent phosphorylation of N-acetyl-L-glutamate. This chain is Acetylglutamate kinase, found in Erythrobacter litoralis (strain HTCC2594).